A 78-amino-acid polypeptide reads, in one-letter code: Structural DNA-binding protein p10 (78 aa).

Residues 1 to 25 show a composition bias toward low complexity; that stretch reads MPTKAGTKSTANKKTTKGSSKSGSA. The disordered stretch occupies residues 1–41; it reads MPTKAGTKSTANKKTTKGSSKSGSARGHTGKTHAPPSMHSG.

It belongs to the asfivirus P10 family.

It is found in the virion. Functionally, may play a role in genome packaging through direct interaction with viral DNA. Binds to ssDNA and dsDNA with the same apparent affinity in vitro. This African swine fever virus (isolate Warthog/Namibia/Wart80/1980) (ASFV) protein is Structural DNA-binding protein p10.